The chain runs to 301 residues: GTPase Era (301 aa).

The 168-residue stretch at 6 to 173 (KSGFVAIVGR…LEQTNANLEI (168 aa)) folds into the Era-type G domain. The segment at 14-21 (GRPNVGKS) is G1. 14–21 (GRPNVGKS) contributes to the GTP binding site. Positions 40–44 (QTTRN) are G2. The interval 61-64 (DTPG) is G3. GTP is bound by residues 61 to 65 (DTPGI) and 123 to 126 (NKID). Residues 123-126 (NKID) are G4. Residues 152–154 (ISA) form a G5 region. In terms of domain architecture, KH type-2 spans 204 to 282 (TREEVPHSVA…FLEIWVKVQK (79 aa)).

It belongs to the TRAFAC class TrmE-Era-EngA-EngB-Septin-like GTPase superfamily. Era GTPase family. As to quaternary structure, monomer.

It is found in the cytoplasm. It localises to the cell membrane. An essential GTPase that binds both GDP and GTP, with rapid nucleotide exchange. Plays a role in 16S rRNA processing and 30S ribosomal subunit biogenesis and possibly also in cell cycle regulation and energy metabolism. This chain is GTPase Era, found in Listeria welshimeri serovar 6b (strain ATCC 35897 / DSM 20650 / CCUG 15529 / CIP 8149 / NCTC 11857 / SLCC 5334 / V8).